A 261-amino-acid polypeptide reads, in one-letter code: Putative diacylated glycolipid transporter LprF (261 aa).

Residues 1–38 (MNGLISQACGSHRPRRPSSLGAVAILIAATLFATVVAG) form the signal peptide. A lipid anchor (N-palmitoyl cysteine) is attached at C39. C39 is lipidated: S-diacylglycerol cysteine. Positions 42-61 (KPTTASSPSPGSPSPEAQQI) are disordered.

It belongs to the LppX/LprAFG lipoprotein family. As to quaternary structure, monomer. Modified by Lgt on Cys-39 with an S-linked diacylglycerol with a mixture of C16, C18 and C19 fatty acids (palmitic, stearic and tuberculostearic acid respectively), signal peptide is removed by LspA, modified by Lnt with an amide-linked mixture of C16 and C19 fatty acids.

It localises to the cell membrane. Functionally, might be involved in transporting short diacylated glycolipids to the cell outer membrane. Binds glycolipids that contain a diacylated glycerophosphate or a diacylated phosphatidylinositol moiety with C14 and C16 chains (upon overexpression in M.smegmatis; M.smegmatis does not encode this gene). Overexpression in M.smegmatis increases the cell wall glycolipid LAM/LM ratio (lipoarabinomannan/lipomannan), suggesting perhaps this protein is involved in the preferential translocation of diacylated LAM to the outer cell membrane. Overexpressing M.smegmatis cells adhere less well to hexadecane droplets, indicating decrease in the hydrophobicity of the cell surface, and have a slightly increased resistance to the antibiotic ethambutol. The chain is Putative diacylated glycolipid transporter LprF (lprF) from Mycobacterium bovis (strain ATCC BAA-935 / AF2122/97).